The chain runs to 888 residues: Serine/arginine repetitive matrix protein 1 (888 aa).

The region spanning 27-126 (QLKFAECLEK…AGIPTAFLEL (100 aa)) is the PWI domain. The segment covering 139–169 (EKLASMKKQDEDKEKRDKEDKDNREKRDRSR) has biased composition (basic and acidic residues). The tract at residues 139 to 888 (EKLASMKKQD…MRKAQVSPPS (750 aa)) is disordered. Residues 170–206 (SPRRRKSRSPSPRRRSSPIRRERKRSHSRSPHHRTKS) show a composition bias toward basic residues. Basic and acidic residues-rich tracts occupy residues 213-232 (PEKKEATPEPEPSVKPKETV) and 254-276 (ETKEISPERNSKKEREKEKEKTR). 2 stretches are compositionally biased toward basic residues: residues 277–325 (QRSP…RTPP) and 332–347 (PRHRRSRSPVRRRRRS). Low complexity-rich tracts occupy residues 348-364 (SASLSGSSSSSSSSRSR) and 473-496 (SVQQRRQYRRQNQQSSSDSGSSSS). Composition is skewed to basic residues over residues 528–554 (PRKRQKEPSPRRRRRSPSPPPARRRRS) and 561–585 (PRRRRSPSLPRRRSPSPPPRRRSPS). Positions 586–598 (PRRYSPPIQRRYS) are enriched in low complexity. Composition is skewed to basic residues over residues 614–629 (PKRRASPSPQSKRRVS) and 642–656 (AKRRSPSISSKHRKG). The segment covering 662–677 (SNRETRSPPQNKRDSP) has biased composition (basic and acidic residues). Low complexity-rich tracts occupy residues 697-712 (ASASPQRRQSPSPSTR), 728-749 (ASTPSPRSARRVSSSRSASGSP), and 763-775 (ARSRSPSANWSPA). Residues 780–790 (SPTQSPSPARN) show a composition bias toward polar residues. Basic residues predominate over residues 798 to 823 (KKKKKKKDKKHKKDKKHKKHKKHKKE). Residues 826–843 (AVAAAPAAVAAADTTSAQ) are compositionally biased toward low complexity. A compositionally biased stretch (basic and acidic residues) spans 866 to 876 (DLEKHLREKAL).

The protein belongs to the splicing factor SR family.

It localises to the nucleus. Involved in pre-mRNA splicing and processing events. The polypeptide is Serine/arginine repetitive matrix protein 1 (SRRM1) (Gallus gallus (Chicken)).